Consider the following 866-residue polypeptide: FHIP family protein v1g243165 (866 aa).

2 disordered regions span residues 739 to 761 (RDGP…ASTS) and 781 to 814 (GSTA…ESQT). A compositionally biased stretch (low complexity) spans 751–761 (SIGSIGSASTS).

This sequence belongs to the FHIP family.

In Nematostella vectensis (Starlet sea anemone), this protein is FHIP family protein v1g243165.